The chain runs to 415 residues: D-galactonate dehydratase family member RspA (415 aa).

Substrate contacts are provided by Asn48 and His133. Catalysis depends on Tyr170, which acts as the Proton donor/acceptor. Asp223 lines the Mg(2+) pocket. Catalysis depends on His225, which acts as the Proton donor/acceptor. Mg(2+) is bound by residues Glu249 and Glu275. Positions 275, 296, 325, 329, and 352 each coordinate substrate.

This sequence belongs to the mandelate racemase/muconate lactonizing enzyme family. GalD subfamily. Requires Mg(2+) as cofactor.

The catalysed reaction is D-mannonate = 2-dehydro-3-deoxy-D-gluconate + H2O. Functionally, has low D-mannonate dehydratase activity (in vitro), suggesting that this is not a physiological substrate and that it has no significant role in D-mannonate degradation in vivo. Has no detectable activity with a panel of 70 other acid sugars (in vitro). This chain is D-galactonate dehydratase family member RspA (rspA), found in Escherichia coli (strain MS 21-1).